Consider the following 465-residue polypeptide: MTTIKLHNTRTRTKEEFVPIDPDNVRMYVCGPTVYDRAHLGNGRPVVVFDVLYRLLRHVYGADHVTYVRNFTDVDDKINARAAERGRPIGDITAETTQWFLDDMGALGALEPDHMPRATQYIPQMVAMIEELVAKGHAYEAEGHVLFAVDSWKEHYGKLSGRSVDDMIAGARVEVAPYKKNPMDFVLWKPSTPDLPGWDSPWGRGRPGWHIECSAMSYELLGESFDIHGGGNDLMFPHHENEIAQSCCAHPEGHFANFWLHNEMLQVEGKKMSKSLGNFFTVRDLLDQGIPGEVIRFVFLSTHYRKPMDWTEKKAKEAEATLRKWWRLTAPLDEMEIKPSPQFIDALTDDLNTPGAIAELHRLAKEKDYAALEAGLEMLGLQETVNFGVASFGFSTSVEVLEAANDLARRWMAYRDAKNFEEADRLKKSALLAGVDLSVSKEGGIQVPSATINGSPTVDELEALK.

A Zn(2+)-binding site is contributed by Cys30. A 'HIGH' region motif is present at residues 32–42 (PTVYDRAHLGN). Residues Cys213, His238, and Glu242 each coordinate Zn(2+). A 'KMSKS' region motif is present at residues 271–275 (KMSKS). An ATP-binding site is contributed by Lys274.

It belongs to the class-I aminoacyl-tRNA synthetase family. Monomer. Requires Zn(2+) as cofactor.

Its subcellular location is the cytoplasm. The catalysed reaction is tRNA(Cys) + L-cysteine + ATP = L-cysteinyl-tRNA(Cys) + AMP + diphosphate. The sequence is that of Cysteine--tRNA ligase from Ruegeria pomeroyi (strain ATCC 700808 / DSM 15171 / DSS-3) (Silicibacter pomeroyi).